The chain runs to 133 residues: MSAKTDEILEQLKSLSLLEASELVKQIEDAFGVSAAAPAGGMMMPMAMPGAPGAAAAEPEEEQTEFDAILTEFPSDKKIAILKVVRSITGLGLKEAKELVESVPKPLKEGIAKEAAEDIKKQLEEAGAKVEIK.

This sequence belongs to the bacterial ribosomal protein bL12 family. As to quaternary structure, homodimer. Part of the ribosomal stalk of the 50S ribosomal subunit. Forms a multimeric L10(L12)X complex, where L10 forms an elongated spine to which 2 to 4 L12 dimers bind in a sequential fashion. Binds GTP-bound translation factors.

In terms of biological role, forms part of the ribosomal stalk which helps the ribosome interact with GTP-bound translation factors. Is thus essential for accurate translation. The sequence is that of Large ribosomal subunit protein bL12 from Trichodesmium erythraeum (strain IMS101).